The chain runs to 217 residues: Nucleoredoxin-like protein 1 (217 aa).

Residues 1 to 164 (MASLFSGRIL…AAELLDRSFL (164 aa)) form the Thioredoxin domain. A compositionally biased stretch (basic and acidic residues) spans 188–204 (VDRDVGRERGRNGRDSG). Residues 188–217 (VDRDVGRERGRNGRDSGDPQGDAGTRAELW) form a disordered region.

Belongs to the nucleoredoxin family. As to quaternary structure, interacts with isoform 1 of BSG. In terms of tissue distribution, expressed in the retina (at protein level). Expressed predominantly by photoreceptors in both the inner and outer nuclear layer (at protein level). Not expressed in the testis, spleen, intestine, lung, cerebellum, or kidney.

It is found in the cell projection. Its subcellular location is the cilium. The protein localises to the photoreceptor outer segment. Its function is as follows. Plays an important role in retinal cone photoreceptor survival. In association with glucose transporter SLC16A1/GLUT1 and BSG, promotes retinal cone survival by enhancing aerobic glycolysis and accelerating the entry of glucose into photoreceptors. May play a role in cone cell viability, slowing down cone degeneration, does not seem to play a role in degenerating rods. The sequence is that of Nucleoredoxin-like protein 1 (Nxnl1) from Mus musculus (Mouse).